A 143-amino-acid polypeptide reads, in one-letter code: Large ribosomal subunit protein uL11 (143 aa).

Belongs to the universal ribosomal protein uL11 family. As to quaternary structure, part of the ribosomal stalk of the 50S ribosomal subunit. Interacts with L10 and the large rRNA to form the base of the stalk. L10 forms an elongated spine to which L12 dimers bind in a sequential fashion forming a multimeric L10(L12)X complex. Post-translationally, one or more lysine residues are methylated.

Functionally, forms part of the ribosomal stalk which helps the ribosome interact with GTP-bound translation factors. The chain is Large ribosomal subunit protein uL11 from Acidovorax ebreus (strain TPSY) (Diaphorobacter sp. (strain TPSY)).